The chain runs to 957 residues: Glycine dehydrogenase (decarboxylating) (957 aa).

Lys708 carries the post-translational modification N6-(pyridoxal phosphate)lysine.

The protein belongs to the GcvP family. The glycine cleavage system is composed of four proteins: P, T, L and H. It depends on pyridoxal 5'-phosphate as a cofactor.

The enzyme catalyses N(6)-[(R)-lipoyl]-L-lysyl-[glycine-cleavage complex H protein] + glycine + H(+) = N(6)-[(R)-S(8)-aminomethyldihydrolipoyl]-L-lysyl-[glycine-cleavage complex H protein] + CO2. Its function is as follows. The glycine cleavage system catalyzes the degradation of glycine. The P protein binds the alpha-amino group of glycine through its pyridoxal phosphate cofactor; CO(2) is released and the remaining methylamine moiety is then transferred to the lipoamide cofactor of the H protein. This chain is Glycine dehydrogenase (decarboxylating), found in Salmonella typhi.